The sequence spans 99 residues: (4S)-4-hydroxy-5-phosphonooxypentane-2,3-dione isomerase (99 aa).

Positions 2–91 constitute an ABM domain; that stretch reads HVTLVEINVK…ISEPRKKRSF (90 aa).

The protein belongs to the LsrG family. Homodimer.

The protein resides in the cytoplasm. The enzyme catalyses (2S)-2-hydroxy-3,4-dioxopentyl phosphate = 3-hydroxy-2,4-dioxopentyl phosphate. Functionally, involved in the degradation of phospho-AI-2, thereby terminating induction of the lsr operon and closing the AI-2 signaling cycle. Catalyzes the conversion of (4S)-4-hydroxy-5-phosphonooxypentane-2,3-dione (P-DPD) to 3-hydroxy-5-phosphonooxypentane-2,4-dione (P-HPD). In Photorhabdus laumondii subsp. laumondii (strain DSM 15139 / CIP 105565 / TT01) (Photorhabdus luminescens subsp. laumondii), this protein is (4S)-4-hydroxy-5-phosphonooxypentane-2,3-dione isomerase.